Reading from the N-terminus, the 1989-residue chain is Zinc finger C3H1 domain-containing protein (1989 aa).

4 disordered regions span residues 1-133 (MATA…RPSF), 148-218 (GRPY…SKNE), 251-290 (SSKE…PEEK), and 310-365 (LPGD…LGED). Ala2 carries the N-acetylalanine modification. Phosphoserine is present on residues Ser15, Ser28, and Ser34. Over residues 20–32 (GELEDGEISDDDN) the composition is skewed to acidic residues. Low complexity predominate over residues 33 to 44 (NSQIRSRSSSSS). The span at 62 to 72 (RGGGSGGGGGS) shows a compositional bias: gly residues. 3 stretches are compositionally biased toward low complexity: residues 114–132 (PPSV…PRPS), 183–192 (GFSSSQSWRE), and 201–210 (KSFGRSPSRK). Residue Ser128 is modified to Phosphoserine. A coiled-coil region spans residues 219-259 (NCVEETFEDLLLKYKQIQLELECINKDEKLALSSKEENVQE). At Ser251 the chain carries Phosphoserine. The segment covering 251 to 262 (SSKEENVQEDPK) has biased composition (basic and acidic residues). The segment covering 266 to 279 (FEDQTSTDNVSITK) has biased composition (polar residues). Basic and acidic residues predominate over residues 280 to 290 (DSSKEVAPEEK). The span at 330-340 (KSDTTDSSQGL) shows a compositional bias: polar residues. Phosphoserine is present on residues Ser352 and Ser383. Residues 358-389 (SEKKLGEDEEELSELQLRLLALQSASKKWQQK) adopt a coiled-coil conformation. 2 disordered regions span residues 385 to 671 (KWQQ…SNLS) and 711 to 770 (LNDS…PEAL). The segment covering 392–402 (QVMKESKEKLT) has biased composition (basic and acidic residues). Residues 430-440 (ALRKQQTKAWK) are compositionally biased toward basic residues. Positions 432–487 (RKQQTKAWKKLQQQKEQERQKEEDQRKQAEEEERRKREEEIRKIRDLSNQEEQYNR) form a coiled coil. 2 stretches are compositionally biased toward basic and acidic residues: residues 444 to 479 (QQKE…RDLS) and 501 to 515 (KSSD…DKQP). Over residues 527-537 (NYEEVAMDTDS) the composition is skewed to acidic residues. A compositionally biased stretch (low complexity) spans 574-583 (VSSLPPLSQP). The segment covering 594-616 (PLPPLPPLPPLPPEDPEQPPKPP) has biased composition (pro residues). The segment covering 647 to 671 (TSSNSDPPSPPVLNNSHPVPRSNLS) has biased composition (polar residues). A phosphoserine mark is found at Ser662, Ser714, Ser717, and Ser719. A compositionally biased stretch (basic and acidic residues) spans 755–770 (PKSEKENDPLRTPEAL). At Thr766 the chain carries Phosphothreonine. Phosphoserine occurs at positions 805 and 809. Positions 847–909 (LKNLVQQEAK…QQRVTIKKAL (63 aa)) form a coiled coil. Ser948, Ser949, and Ser953 each carry phosphoserine. The stretch at 965-989 (EKRRLQKLEYEYALKIQKLKEARAL) forms a coiled coil. Phosphoserine is present on residues Ser998 and Ser1046. The C3H1-type zinc-finger motif lies at 1185–1206 (FCRFDLTGTCNDDDCQWQHIQD). Phosphoserine is present on residues Ser1301, Ser1303, and Ser1304. TPR repeat units follow at residues 1361–1400 (VQLW…NKDN), 1401–1434 (PEIW…APDY), 1438–1471 (WTFL…ETSN), 1478–1511 (LEAL…ANDG), 1602–1635 (LPLY…CPIN), 1636–1669 (CQLL…NPQN), and 1745–1778 (PYLW…AMRC).

As to quaternary structure, component of the poly(A) tail exosome targeting (PAXT) complex made of accessory factors, such as PABPN1, ZFC3H1 and MTREX, and which directs a subset of long and polyadenylated poly(A) RNAs for exosomal degradation. Co-localizes with component of the CBC-ARS2 (CBCA) complex. Binds to RNA exosome components. Interacts with NCBP1/CBP80, ZC3H18, MTREX and PABPN1 in a RNase-insensitive manner, and with PABPC4, PABPC1 and ZC3H14 in a RNase-sensitive manner.

It localises to the nucleus. Functionally, subunit of the trimeric poly(A) tail exosome targeting (PAXT) complex, a complex that directs a subset of long and polyadenylated poly(A) RNAs for exosomal degradation. The RNA exosome is fundamental for the degradation of RNA in eukaryotic nuclei. Substrate targeting is facilitated by its cofactor MTREX, which links to RNA-binding protein adapters. This Homo sapiens (Human) protein is Zinc finger C3H1 domain-containing protein (ZFC3H1).